A 179-amino-acid polypeptide reads, in one-letter code: MKQLLEFIPLILFFAVYKLQGIQAAAITLIIATLIQLMILKLKYGKIEKQQLIMGSAVVFFGSLSAYFNELEFLKWKVTVVYALFSLILLVSQYGFKKPLIQQLLGKEIQLPTYVWHNLNLGWAVFFLLCMLINLYISQYLSDDIWVDFKTFGILGMTLIATLVTGVYIYRYLPKSEQE.

The next 5 membrane-spanning stretches (helical) occupy residues 11 to 31 (ILFF…TLII), 52 to 69 (LIMG…AYFN), 71 to 91 (LEFL…ILLV), 121 to 141 (LGWA…SQYL), and 149 to 169 (FKTF…GVYI).

The protein belongs to the YciB family.

It localises to the cell inner membrane. Plays a role in cell envelope biogenesis, maintenance of cell envelope integrity and membrane homeostasis. The sequence is that of Inner membrane-spanning protein YciB from Histophilus somni (strain 129Pt) (Haemophilus somnus).